Here is a 486-residue protein sequence, read N- to C-terminus: ATP synthase subunit beta 2 (486 aa).

166–173 (GGAGVGKT) contacts ATP.

Belongs to the ATPase alpha/beta chains family. F-type ATPases have 2 components, CF(1) - the catalytic core - and CF(0) - the membrane proton channel. CF(1) has five subunits: alpha(3), beta(3), gamma(1), delta(1), epsilon(1). CF(0) has three main subunits: a(1), b(2) and c(9-12). The alpha and beta chains form an alternating ring which encloses part of the gamma chain. CF(1) is attached to CF(0) by a central stalk formed by the gamma and epsilon chains, while a peripheral stalk is formed by the delta and b chains.

It localises to the cell inner membrane. The catalysed reaction is ATP + H2O + 4 H(+)(in) = ADP + phosphate + 5 H(+)(out). Its function is as follows. Produces ATP from ADP in the presence of a proton gradient across the membrane. The catalytic sites are hosted primarily by the beta subunits. The polypeptide is ATP synthase subunit beta 2 (Gluconobacter oxydans (strain 621H) (Gluconobacter suboxydans)).